Here is a 299-residue protein sequence, read N- to C-terminus: 4-hydroxy-3-methylbut-2-enyl diphosphate reductase (299 aa).

C12 is a [4Fe-4S] cluster binding site. 2 residues coordinate (2E)-4-hydroxy-3-methylbut-2-enyl diphosphate: H42 and H88. 2 residues coordinate dimethylallyl diphosphate: H42 and H88. Residues H42 and H88 each coordinate isopentenyl diphosphate. A [4Fe-4S] cluster-binding site is contributed by C110. H138 is a (2E)-4-hydroxy-3-methylbut-2-enyl diphosphate binding site. H138 lines the dimethylallyl diphosphate pocket. H138 is an isopentenyl diphosphate binding site. Catalysis depends on E140, which acts as the Proton donor. Residue T177 coordinates (2E)-4-hydroxy-3-methylbut-2-enyl diphosphate. C205 is a binding site for [4Fe-4S] cluster. S233, N235, and S277 together coordinate (2E)-4-hydroxy-3-methylbut-2-enyl diphosphate. Dimethylallyl diphosphate contacts are provided by S233, N235, and S277. 3 residues coordinate isopentenyl diphosphate: S233, N235, and S277.

Belongs to the IspH family. It depends on [4Fe-4S] cluster as a cofactor.

The catalysed reaction is isopentenyl diphosphate + 2 oxidized [2Fe-2S]-[ferredoxin] + H2O = (2E)-4-hydroxy-3-methylbut-2-enyl diphosphate + 2 reduced [2Fe-2S]-[ferredoxin] + 2 H(+). It carries out the reaction dimethylallyl diphosphate + 2 oxidized [2Fe-2S]-[ferredoxin] + H2O = (2E)-4-hydroxy-3-methylbut-2-enyl diphosphate + 2 reduced [2Fe-2S]-[ferredoxin] + 2 H(+). It functions in the pathway isoprenoid biosynthesis; dimethylallyl diphosphate biosynthesis; dimethylallyl diphosphate from (2E)-4-hydroxy-3-methylbutenyl diphosphate: step 1/1. Its pathway is isoprenoid biosynthesis; isopentenyl diphosphate biosynthesis via DXP pathway; isopentenyl diphosphate from 1-deoxy-D-xylulose 5-phosphate: step 6/6. In terms of biological role, catalyzes the conversion of 1-hydroxy-2-methyl-2-(E)-butenyl 4-diphosphate (HMBPP) into a mixture of isopentenyl diphosphate (IPP) and dimethylallyl diphosphate (DMAPP). Acts in the terminal step of the DOXP/MEP pathway for isoprenoid precursor biosynthesis. This chain is 4-hydroxy-3-methylbut-2-enyl diphosphate reductase, found in Malacoplasma penetrans (strain HF-2) (Mycoplasma penetrans).